Reading from the N-terminus, the 228-residue chain is Protein 33K (228 aa).

The tract at residues M1 to P156 is disordered. Residues T15 to D53 show a composition bias toward acidic residues. Low complexity-rich tracts occupy residues E54–P63 and A104–A119. Positions Y171–C198 are necessary for nuclear subcellular location. The segment at S177–S197 is RS-repeat; required for splicing enhancer activity.

The protein belongs to the adenoviridae splicing factor family. As to quaternary structure, homooligomer. Interacts with DBP; this interaction occurs at a unique vertex during genome packaging. Interacts with IVa2; this interaction occurs at a unique vertex during genome packaging and seems to potentiate IVa2 and 33K oligomerization. In terms of processing, phosphorylated in vitro by human PKA and PRKDC. PRKDC inhibits, whereas PKA activates the splicing factor.

It is found in the host nucleus. Its function is as follows. Promotes alternative splicing of late transcripts by promoting splicing at weak 3' splice sites. Required for the temporal activation of major late pre-mRNA splicing at late times of infection. Induces the splicing and expression of the late capsid vertex protein. Probably functions as the small terminase that is part of the molecular motor that translocates genomic DNA in empty capsid during DNA packaging. This motor is located at a unique vertex and comprises at least the IVa2 ATPase, the small terminase 33K and probably a portal. Forms a ring-like structure of about 17 nm in which genomic DNA is translocated into the capsid. Stimulates IVa2 ATPase activity in the presence of the viral genome. Once the DNA is packaged, the terminase detaches: the 33K protein is present in the empty particles, but not in the mature virions. Also involved in virion assembly. This Homo sapiens (Human) protein is Protein 33K.